The chain runs to 100 residues: Urease subunit gamma (100 aa).

This sequence belongs to the urease gamma subunit family. As to quaternary structure, heterotrimer of UreA (gamma), UreB (beta) and UreC (alpha) subunits. Three heterotrimers associate to form the active enzyme.

Its subcellular location is the cytoplasm. The enzyme catalyses urea + 2 H2O + H(+) = hydrogencarbonate + 2 NH4(+). It participates in nitrogen metabolism; urea degradation; CO(2) and NH(3) from urea (urease route): step 1/1. The protein is Urease subunit gamma of Yersinia bercovieri.